A 175-amino-acid chain; its full sequence is Large ribosomal subunit protein uL6 (175 aa).

This sequence belongs to the universal ribosomal protein uL6 family. In terms of assembly, part of the 50S ribosomal subunit.

This protein binds to the 23S rRNA, and is important in its secondary structure. It is located near the subunit interface in the base of the L7/L12 stalk, and near the tRNA binding site of the peptidyltransferase center. The polypeptide is Large ribosomal subunit protein uL6 (Xanthomonas axonopodis pv. citri (strain 306)).